The following is an 809-amino-acid chain: MSRFFAASYEYDSASSSSEEDLLSSSEEELLSSSSLSEEESDDSFFNDSESESDFDSDDSDAKPYGPDWFKKQEFRRGGGGGNKFLKGASYSDSDESDEASKKVVKSAKEKLLDEMQTSSGKIDAAELTNDWITILNEFDSVTRLLTRAQQQNFGTPNIFVKVVAQVEDAVAASQEEINNKAVAKAFNTAKQRVKKISREHQTLLAKYREDPESFEKETSVEVDATPELAQFAVGKKTTDLSSIATTSSETGFFPALSIVLDSRGKKNIDQQALAQSMDDLLQTTKTPYEKIIAYLTLIPIRLDSSTNLSYQPIDQWKATYNDVSSLLSILDENINTYQVSELAPFNDSLENEPEANEKGVKTILGSILSFVDRLDDEFTKSLLNTDPHSSDYLIRLRDEQAIYNLILRTQLYLEATLPEDRQIDLLSRIFVRRLNHIYYKSNELIRIMEVAAWKVAPSSYTSKLTPYDGAVSDSYLSGVISTLTDALSKQQNQSLRKRAVLYNVYYTALNKEFQVAKDMLIESKVQSFINKSDPSLQILFNRVVVQLGLSAFKLCLIEECHQILNDLLASSHLREILGQQTLQRVTAHSNSSNADEREKLCLPFHEHINLDLIDVVFMTCSLLIEIPQMTAFYSGIKIKKIPYSQKSIRRALEHYEKSSFQGPPETLRDYILHSAKEMQKGNWKKSFELLKSIQAWALLPNSASVLDNLAERLQVESLKTYFFTNKRFYSKLSMKKLSDLFNLPEDKIVESLQAVITEYEIDASFNEDKSVLSIAKGAEITKLEEVASKLNKEVKITKERLHPSRGRR.

The interval Met1–Lys102 is disordered. Acidic residues-rich tracts occupy residues Ser18–Leu30 and Ser37–Asp59. One can recognise a PCI domain in the interval Phe605–Glu780.

The protein belongs to the eIF-3 subunit C family. In terms of assembly, component of the eukaryotic translation initiation factor 3 (eIF-3) complex.

Its subcellular location is the cytoplasm. Component of the eukaryotic translation initiation factor 3 (eIF-3) complex, which is involved in protein synthesis of a specialized repertoire of mRNAs and, together with other initiation factors, stimulates binding of mRNA and methionyl-tRNAi to the 40S ribosome. The eIF-3 complex specifically targets and initiates translation of a subset of mRNAs involved in cell proliferation. This Vanderwaltozyma polyspora (strain ATCC 22028 / DSM 70294 / BCRC 21397 / CBS 2163 / NBRC 10782 / NRRL Y-8283 / UCD 57-17) (Kluyveromyces polysporus) protein is Eukaryotic translation initiation factor 3 subunit C.